A 345-amino-acid polypeptide reads, in one-letter code: S-adenosylmethionine:tRNA ribosyltransferase-isomerase (345 aa).

This sequence belongs to the QueA family. Monomer.

The protein resides in the cytoplasm. The enzyme catalyses 7-aminomethyl-7-carbaguanosine(34) in tRNA + S-adenosyl-L-methionine = epoxyqueuosine(34) in tRNA + adenine + L-methionine + 2 H(+). It participates in tRNA modification; tRNA-queuosine biosynthesis. Its function is as follows. Transfers and isomerizes the ribose moiety from AdoMet to the 7-aminomethyl group of 7-deazaguanine (preQ1-tRNA) to give epoxyqueuosine (oQ-tRNA). The sequence is that of S-adenosylmethionine:tRNA ribosyltransferase-isomerase from Anaeromyxobacter sp. (strain K).